A 312-amino-acid polypeptide reads, in one-letter code: Glyoxylate/hydroxypyruvate reductase A (312 aa).

Arg-227 is a catalytic residue. His-275 functions as the Proton donor in the catalytic mechanism.

This sequence belongs to the D-isomer specific 2-hydroxyacid dehydrogenase family. GhrA subfamily.

The protein resides in the cytoplasm. It carries out the reaction glycolate + NADP(+) = glyoxylate + NADPH + H(+). It catalyses the reaction (R)-glycerate + NAD(+) = 3-hydroxypyruvate + NADH + H(+). The catalysed reaction is (R)-glycerate + NADP(+) = 3-hydroxypyruvate + NADPH + H(+). Catalyzes the NADPH-dependent reduction of glyoxylate and hydroxypyruvate into glycolate and glycerate, respectively. The protein is Glyoxylate/hydroxypyruvate reductase A of Shigella dysenteriae serotype 1 (strain Sd197).